A 585-amino-acid chain; its full sequence is Glutamate decarboxylase 2 (585 aa).

The interval 1–25 (MASPGSGFWSFGSEDGSGDPENPST) is disordered. Phosphoserine is present on residues Ser-3, Ser-6, Ser-10, and Ser-13. Residues Cys-30 and Cys-45 are each lipidated (S-palmitoyl cysteine). 181–183 (QLS) is a binding site for substrate. At Lys-396 the chain carries N6-(pyridoxal phosphate)lysine. Arg-558 serves as a coordination point for substrate.

The protein belongs to the group II decarboxylase family. Homodimer. Pyridoxal 5'-phosphate is required as a cofactor. In terms of processing, phosphorylated; which does not affect kinetic parameters or subcellular location. Palmitoylated; which is required for presynaptic clustering.

Its subcellular location is the cytoplasm. The protein localises to the cytosol. The protein resides in the cytoplasmic vesicle. It is found in the presynaptic cell membrane. It localises to the golgi apparatus membrane. It catalyses the reaction L-glutamate + H(+) = 4-aminobutanoate + CO2. In terms of biological role, catalyzes the production of GABA. The polypeptide is Glutamate decarboxylase 2 (GAD2) (Canis lupus familiaris (Dog)).